The primary structure comprises 175 residues: Ribosome maturation factor RimM (175 aa).

A PRC barrel domain is found at 98 to 175 (EGEYYWHQLE…EMRVDWDADF (78 aa)).

The protein belongs to the RimM family. As to quaternary structure, binds ribosomal protein uS19.

It localises to the cytoplasm. In terms of biological role, an accessory protein needed during the final step in the assembly of 30S ribosomal subunit, possibly for assembly of the head region. Essential for efficient processing of 16S rRNA. May be needed both before and after RbfA during the maturation of 16S rRNA. It has affinity for free ribosomal 30S subunits but not for 70S ribosomes. This chain is Ribosome maturation factor RimM, found in Pseudomonas aeruginosa (strain ATCC 15692 / DSM 22644 / CIP 104116 / JCM 14847 / LMG 12228 / 1C / PRS 101 / PAO1).